Here is a 379-residue protein sequence, read N- to C-terminus: DNA-directed RNA polymerase subunit Rpo1C (379 aa).

This sequence belongs to the RNA polymerase beta' chain family. As to quaternary structure, part of the RNA polymerase complex.

The protein resides in the cytoplasm. It carries out the reaction RNA(n) + a ribonucleoside 5'-triphosphate = RNA(n+1) + diphosphate. DNA-dependent RNA polymerase (RNAP) catalyzes the transcription of DNA into RNA using the four ribonucleoside triphosphates as substrates. Forms part of the jaw domain. In Pyrobaculum aerophilum (strain ATCC 51768 / DSM 7523 / JCM 9630 / CIP 104966 / NBRC 100827 / IM2), this protein is DNA-directed RNA polymerase subunit Rpo1C.